The primary structure comprises 338 residues: Glycerol-3-phosphate dehydrogenase [NAD(P)+] (338 aa).

Residues S13, W14, and K108 each contribute to the NADPH site. Sn-glycerol 3-phosphate contacts are provided by K108, G139, and S141. NADPH is bound at residue A143. Sn-glycerol 3-phosphate is bound by residues K194, D247, S257, R258, and N259. The active-site Proton acceptor is K194. R258 contacts NADPH. NADPH contacts are provided by V282 and E284.

Belongs to the NAD-dependent glycerol-3-phosphate dehydrogenase family.

It localises to the cytoplasm. It carries out the reaction sn-glycerol 3-phosphate + NAD(+) = dihydroxyacetone phosphate + NADH + H(+). The enzyme catalyses sn-glycerol 3-phosphate + NADP(+) = dihydroxyacetone phosphate + NADPH + H(+). The protein operates within membrane lipid metabolism; glycerophospholipid metabolism. In terms of biological role, catalyzes the reduction of the glycolytic intermediate dihydroxyacetone phosphate (DHAP) to sn-glycerol 3-phosphate (G3P), the key precursor for phospholipid synthesis. The sequence is that of Glycerol-3-phosphate dehydrogenase [NAD(P)+] from Streptococcus pneumoniae (strain Taiwan19F-14).